Consider the following 580-residue polypeptide: CTP synthase (580 aa).

Residues 304 to 559 form the Glutamine amidotransferase type-1 domain; sequence NIILVGKYVS…VAASSGCLDE (256 aa). Active-site for GATase activity residues include Cys403, His532, and Glu534.

It belongs to the CTP synthase family.

The catalysed reaction is UTP + L-glutamine + ATP + H2O = CTP + L-glutamate + ADP + phosphate + 2 H(+). It participates in pyrimidine metabolism; CTP biosynthesis via de novo pathway; CTP from UDP: step 2/2. Its function is as follows. Catalyzes the ATP-dependent amination of UTP to CTP with either L-glutamine or ammonia as the source of nitrogen. The polypeptide is CTP synthase (URA7) (Gibberella zeae (strain ATCC MYA-4620 / CBS 123657 / FGSC 9075 / NRRL 31084 / PH-1) (Wheat head blight fungus)).